The chain runs to 198 residues: Dermorphin-2 (198 aa).

Positions 1–20 (MSFLKKSLLLILFLGLVSLS) are cleaved as a signal peptide. Residues 21–45 (VCKEEKRVSEEENENEENHEEGSEM) constitute a propeptide that is removed on maturation. Residues 24–198 (EEKRVSEEEN…AFGYPSGEAK (175 aa)) are disordered. Residue Ala49 is modified to D-alanine (Ala). Ser54 is modified (serine amide). The segment covering 56-65 (EAKKIKRESE) has biased composition (basic and acidic residues). Positions 56 to 80 (EAKKIKRESEEEKEIEENHEEGSEM) are excised as a propeptide. Ala84 is modified (D-alanine (Ala)). At Ser89 the chain carries Serine amide. Positions 91 to 115 (EAKKIKRESEEENENEENHEEGSEM) are excised as a propeptide. Residues 100–109 (EEENENEENH) are compositionally biased toward acidic residues. Ala119 is modified (D-alanine (Ala)). At Ser124 the chain carries Serine amide. The span at 126–135 (EAKKIKRESE) shows a compositional bias: basic and acidic residues. Positions 126-150 (EAKKIKRESEEEKEIEENHEEGSEM) are excised as a propeptide. Ala154 is subject to D-alanine (Ala). Residue Ser159 is modified to Serine amide. A propeptide spanning residues 161–185 (EAKKIKRESEEENENEENHEEGSEM) is cleaved from the precursor. The segment covering 170–179 (EEENENEENH) has biased composition (acidic residues). Residue Ala189 is modified to D-alanine (Ala). Ser194 bears the Serine amide mark. The propeptide occupies 196–198 (EAK).

The protein belongs to the frog skin active peptide (FSAP) family. Dermorphin subfamily. In terms of tissue distribution, expressed by the skin glands.

The protein resides in the secreted. In terms of biological role, dermorphin has a very potent opiate-like activity. It has high affinity and selectivity for mu-type opioid receptors. The polypeptide is Dermorphin-2 (Phyllomedusa sauvagei (Sauvage's leaf frog)).